The following is a 158-amino-acid chain: 6,7-dimethyl-8-ribityllumazine synthase (158 aa).

5-amino-6-(D-ribitylamino)uracil contacts are provided by residues F22, A56 to E58, and V80 to I82. Residue E85–T86 coordinates (2S)-2-hydroxy-3-oxobutyl phosphate. H88 functions as the Proton donor in the catalytic mechanism. N113 is a binding site for 5-amino-6-(D-ribitylamino)uracil. Position 127 (R127) interacts with (2S)-2-hydroxy-3-oxobutyl phosphate.

It belongs to the DMRL synthase family.

The enzyme catalyses (2S)-2-hydroxy-3-oxobutyl phosphate + 5-amino-6-(D-ribitylamino)uracil = 6,7-dimethyl-8-(1-D-ribityl)lumazine + phosphate + 2 H2O + H(+). It participates in cofactor biosynthesis; riboflavin biosynthesis; riboflavin from 2-hydroxy-3-oxobutyl phosphate and 5-amino-6-(D-ribitylamino)uracil: step 1/2. Its function is as follows. Catalyzes the formation of 6,7-dimethyl-8-ribityllumazine by condensation of 5-amino-6-(D-ribitylamino)uracil with 3,4-dihydroxy-2-butanone 4-phosphate. This is the penultimate step in the biosynthesis of riboflavin. This is 6,7-dimethyl-8-ribityllumazine synthase from Neisseria gonorrhoeae (strain ATCC 700825 / FA 1090).